The sequence spans 399 residues: Acetate kinase (399 aa).

Residue N10 coordinates Mg(2+). Residue K17 participates in ATP binding. R91 contacts substrate. The active-site Proton donor/acceptor is D148. Residues 208–212 (HLGNG), 283–285 (DCR), and 331–335 (GIGEN) contribute to the ATP site. E385 contributes to the Mg(2+) binding site.

The protein belongs to the acetokinase family. Homodimer. It depends on Mg(2+) as a cofactor. Requires Mn(2+) as cofactor.

It is found in the cytoplasm. The catalysed reaction is acetate + ATP = acetyl phosphate + ADP. Its pathway is metabolic intermediate biosynthesis; acetyl-CoA biosynthesis; acetyl-CoA from acetate: step 1/2. Functionally, catalyzes the formation of acetyl phosphate from acetate and ATP. Can also catalyze the reverse reaction. The sequence is that of Acetate kinase from Shewanella sp. (strain ANA-3).